Reading from the N-terminus, the 121-residue chain is Small ribosomal subunit protein uS13 (121 aa).

Positions 94 to 121 (GLPLRGQRTRTNARTRKGPRRAAQSLKK) are disordered.

Belongs to the universal ribosomal protein uS13 family. As to quaternary structure, part of the 30S ribosomal subunit. Forms a loose heterodimer with protein S19. Forms two bridges to the 50S subunit in the 70S ribosome.

Functionally, located at the top of the head of the 30S subunit, it contacts several helices of the 16S rRNA. In the 70S ribosome it contacts the 23S rRNA (bridge B1a) and protein L5 of the 50S subunit (bridge B1b), connecting the 2 subunits; these bridges are implicated in subunit movement. Contacts the tRNAs in the A and P-sites. This is Small ribosomal subunit protein uS13 from Paraburkholderia phymatum (strain DSM 17167 / CIP 108236 / LMG 21445 / STM815) (Burkholderia phymatum).